Consider the following 244-residue polypeptide: ATP synthase subunit a, chloroplastic (244 aa).

5 consecutive transmembrane segments (helical) span residues 35 to 55 (QVLI…VIAV), 92 to 112 (VPFI…GALL), 131 to 151 (INTT…AGLS), 196 to 216 (LVVV…VMFL), and 217 to 237 (GLFT…AYIG).

The protein belongs to the ATPase A chain family. In terms of assembly, F-type ATPases have 2 components, CF(1) - the catalytic core - and CF(0) - the membrane proton channel. CF(1) has five subunits: alpha(3), beta(3), gamma(1), delta(1), epsilon(1). CF(0) has four main subunits: a, b, b' and c.

The protein localises to the plastid. It localises to the chloroplast thylakoid membrane. Key component of the proton channel; it plays a direct role in the translocation of protons across the membrane. This Gossypium hirsutum (Upland cotton) protein is ATP synthase subunit a, chloroplastic.